Here is a 30-residue protein sequence, read N- to C-terminus: Mycofactocin precursor peptide (30 aa).

The protein belongs to the mycofactocin precursor peptide family. As to quaternary structure, interacts with MftB. In terms of processing, the post-translational modifications that lead to mycofactocin involve oxidative decarboxylation of the C-terminal tyrosine residue catalyzed by MftC, introduction of a tyramine-valine cross-link, removal of the modified C-terminal dipeptide by MftE. The released dipeptide then undergoes oxidative deamination by MftD, glycosylation by MftF and methylation by an unknown enzyme.

Precursor peptide that leads to mycofactocin (MFT) after extensive post-translational modifications by enzymes encoded by adjacent genes. Mycofactocin acts as a redox cofactor of nicotinamide-dependent oxidoreductases encoded in the same locus. This is Mycofactocin precursor peptide from Mycobacterium ulcerans (strain Agy99).